Consider the following 124-residue polypeptide: UPF0102 protein Rcas_2007 (124 aa).

Belongs to the UPF0102 family.

The sequence is that of UPF0102 protein Rcas_2007 from Roseiflexus castenholzii (strain DSM 13941 / HLO8).